The chain runs to 409 residues: Arginine biosynthesis bifunctional protein ArgJ (409 aa).

The substrate site is built by T156, K182, T193, E280, N404, and S409. The Nucleophile role is filled by T193.

This sequence belongs to the ArgJ family. Heterotetramer of two alpha and two beta chains.

It localises to the cytoplasm. The catalysed reaction is N(2)-acetyl-L-ornithine + L-glutamate = N-acetyl-L-glutamate + L-ornithine. The enzyme catalyses L-glutamate + acetyl-CoA = N-acetyl-L-glutamate + CoA + H(+). Its pathway is amino-acid biosynthesis; L-arginine biosynthesis; L-ornithine and N-acetyl-L-glutamate from L-glutamate and N(2)-acetyl-L-ornithine (cyclic): step 1/1. It functions in the pathway amino-acid biosynthesis; L-arginine biosynthesis; N(2)-acetyl-L-ornithine from L-glutamate: step 1/4. Catalyzes two activities which are involved in the cyclic version of arginine biosynthesis: the synthesis of N-acetylglutamate from glutamate and acetyl-CoA as the acetyl donor, and of ornithine by transacetylation between N(2)-acetylornithine and glutamate. This is Arginine biosynthesis bifunctional protein ArgJ from Ralstonia nicotianae (strain ATCC BAA-1114 / GMI1000) (Ralstonia solanacearum).